We begin with the raw amino-acid sequence, 256 residues long: 3-isopropylmalate dehydratase small subunit 2 (256 aa).

The N-terminal 59 residues, 1–59 (MAYSLPTFPQALPCSSTKTSSSLATFRSPFLRFNGSTSLIPSSISITSRGTSSPTIIPR), are a transit peptide targeting the chloroplast.

Belongs to the LeuD family. Heterodimer of the large LEUC/IIL1 subunit and the small LEUD (SSU1, SSU2 or SSU3) subunits. Expressed in vascular bundles of roots, cotyledons and rosette leaves. Expressed in stem vascular bundles which branche off into lateral inflorescences. Expressed in connective tissues in anthers. In young seedlings, expressed in cotyledon epidermal cells and vasculare bundles. In hypocotyls, expressed in parenchyma cells surrounding the vasculature and further peripheral cells. In seedling roots, expressed in cells along the vasculature. In roots of adult plants, expressed in cells closely associated with the stele. In flowering stalks, expressed in parenchyma cells associated with the phloem or the xylem. Expressed in the vasculature of sepals and petals.

It is found in the plastid. The protein localises to the chloroplast stroma. The catalysed reaction is (2R,3S)-3-isopropylmalate = (2S)-2-isopropylmalate. It carries out the reaction a 2-(omega-methylsulfanyl)alkylmalate = a 2-(omega-methylsulfanyl)alkylmaleate + H2O. The enzyme catalyses 2-(3-methylsulfanyl)propylmalate = 2-(2-methylsulfanyl)propylmaleate + H2O. It catalyses the reaction a 3-(omega-methylsulfanyl)alkylmalate = a 2-(omega-methylsulfanyl)alkylmaleate + H2O. The catalysed reaction is 2-(2-methylsulfanyl)ethylmalate = 2-(2-methylsulfanyl)ethylmaleate + H2O. It carries out the reaction 3-(2-methylsulfanyl)ethylmalate = 2-(2-methylsulfanyl)ethylmaleate + H2O. The enzyme catalyses 3-(3-methylsulfanyl)propylmalate = 2-(2-methylsulfanyl)propylmaleate + H2O. It functions in the pathway amino-acid biosynthesis; L-leucine biosynthesis; L-leucine from 3-methyl-2-oxobutanoate: step 2/4. Catalyzes the isomerization between 2-isopropylmalate and 3-isopropylmalate, via the formation of 2-isopropylmaleate. Functions redundantly with LEUD2 in the methionine chain elongation pathway of aliphatic glucosinolate formation. This chain is 3-isopropylmalate dehydratase small subunit 2, found in Arabidopsis thaliana (Mouse-ear cress).